Consider the following 182-residue polypeptide: Adenine phosphoribosyltransferase (182 aa).

This sequence belongs to the purine/pyrimidine phosphoribosyltransferase family. In terms of assembly, homodimer.

The protein resides in the cytoplasm. The enzyme catalyses AMP + diphosphate = 5-phospho-alpha-D-ribose 1-diphosphate + adenine. It participates in purine metabolism; AMP biosynthesis via salvage pathway; AMP from adenine: step 1/1. Catalyzes a salvage reaction resulting in the formation of AMP, that is energically less costly than de novo synthesis. The protein is Adenine phosphoribosyltransferase of Wolinella succinogenes (strain ATCC 29543 / DSM 1740 / CCUG 13145 / JCM 31913 / LMG 7466 / NCTC 11488 / FDC 602W) (Vibrio succinogenes).